The chain runs to 145 residues: MAKLITKNKQVFRDYEIIDKLEAGIVLQGWEVKSIRASDVNLKGSYCVFKANELYLINSYIGLYMAVKGDERQSRKLLLHKNQLRRLKQKVESQSLSIVPLSLYWNKKSKVKAEIALVRGLKKHDKREKLKKEETNKKLKKLISY.

This sequence belongs to the SmpB family.

It localises to the cytoplasm. Functionally, required for rescue of stalled ribosomes mediated by trans-translation. Binds to transfer-messenger RNA (tmRNA), required for stable association of tmRNA with ribosomes. tmRNA and SmpB together mimic tRNA shape, replacing the anticodon stem-loop with SmpB. tmRNA is encoded by the ssrA gene; the 2 termini fold to resemble tRNA(Ala) and it encodes a 'tag peptide', a short internal open reading frame. During trans-translation Ala-aminoacylated tmRNA acts like a tRNA, entering the A-site of stalled ribosomes, displacing the stalled mRNA. The ribosome then switches to translate the ORF on the tmRNA; the nascent peptide is terminated with the 'tag peptide' encoded by the tmRNA and targeted for degradation. The ribosome is freed to recommence translation, which seems to be the essential function of trans-translation. The polypeptide is SsrA-binding protein (Mycoplasmopsis pulmonis (strain UAB CTIP) (Mycoplasma pulmonis)).